A 380-amino-acid chain; its full sequence is Cytochrome b (380 aa).

The next 4 membrane-spanning stretches (helical) occupy residues 33 to 53 (FGSL…FLAM), 77 to 98 (WLIR…YLHI), 113 to 133 (WNVG…GYVL), and 178 to 198 (FFAF…IHLL). The heme b site is built by H83 and H97. Heme b-binding residues include H182 and H196. H201 is an a ubiquinone binding site. A run of 4 helical transmembrane segments spans residues 226–246 (YKDL…ALFS), 288–308 (LGGV…PALH), 320–340 (ITQL…WIGG), and 347–367 (FIII…TLIP).

The protein belongs to the cytochrome b family. The cytochrome bc1 complex contains 3 respiratory subunits (MT-CYB, CYC1 and UQCRFS1), 2 core proteins (UQCRC1 and UQCRC2) and probably 6 low-molecular weight proteins. Heme b is required as a cofactor.

It is found in the mitochondrion inner membrane. Its function is as follows. Component of the ubiquinol-cytochrome c reductase complex (complex III or cytochrome b-c1 complex) that is part of the mitochondrial respiratory chain. The b-c1 complex mediates electron transfer from ubiquinol to cytochrome c. Contributes to the generation of a proton gradient across the mitochondrial membrane that is then used for ATP synthesis. This chain is Cytochrome b (mt-cyb), found in Percopsis transmontana (Sand roller).